The chain runs to 570 residues: MQGPLYIGFDLSTQQLKGLVVNSDLKVVYVSKFDFDADSRGFPIKKGVLTNEAEHEVFAPVALWLQALDGVLEGLRKQGMDFSQIKGISGAGQQHGSVYWGENAEKLLKELDASKTLEEQLDGAFSHPFSPNWQDSSTQKECDEFDAALGGQSELAFATGSKAHHRFTGPQIMRFQRKYPDVYKKTSRISLVSSFIASLFLGHIAPMDISDVCGMNLWNIKKGAYDEKLLQLCAGSSGVDDLKRKLGDVPEDGGIHLGPIDRYYVERYGFSPDCTIIPATGDNPATILALPLRASDAMVSLGTSTTFLMSTPSYKPDPATHFFNHPTTAGLYMFMLCYKNGGLARELVRDAVNEKLGEKPSTSWANFDKVTLETPPMGQKADSDPMKLGLFFPRPEIVPNLRSGQWRFDYNPKDGSLQPSNGGWDEPFDEARAIVESQMLSLRLRSRGLTQSPGEGIPAQPRRVYLVGGGSKNKAIAKVAGEILGGSEGVYKLEIGDNACALGAAYKAVWAMERAEGQTFEDLIGKRWHEEEFIEKIADGYQPGVFERYGQAVEGFEKMELEVLRQEGKH.

Substrate is bound by residues His-95, Arg-166, Asp-282, and Asn-283. Residues Trp-364, 469-470, and Asn-473 each bind ATP; that span reads GG.

Belongs to the FGGY kinase family.

Its subcellular location is the cytoplasm. It carries out the reaction D-xylulose + ATP = D-xylulose 5-phosphate + ADP + H(+). Its function is as follows. Highly specific D-xylulose kinase which participates in the catabolism of xylose. Xylose is a major component of hemicelluloses such as xylan. Most fungi utilize D-xylose via three enzymatic reactions, xylose reductase (XR), xylitol dehydrogenase (XDH), and xylulokinase, to form xylulose 5-phosphate, which enters pentose phosphate pathway. The chain is D-xylulose kinase A (xkiA) from Aspergillus niger.